A 502-amino-acid polypeptide reads, in one-letter code: Aspartyl/glutamyl-tRNA(Asn/Gln) amidotransferase subunit B (502 aa).

It belongs to the GatB/GatE family. GatB subfamily. Heterotrimer of A, B and C subunits.

It catalyses the reaction L-glutamyl-tRNA(Gln) + L-glutamine + ATP + H2O = L-glutaminyl-tRNA(Gln) + L-glutamate + ADP + phosphate + H(+). The catalysed reaction is L-aspartyl-tRNA(Asn) + L-glutamine + ATP + H2O = L-asparaginyl-tRNA(Asn) + L-glutamate + ADP + phosphate + 2 H(+). Allows the formation of correctly charged Asn-tRNA(Asn) or Gln-tRNA(Gln) through the transamidation of misacylated Asp-tRNA(Asn) or Glu-tRNA(Gln) in organisms which lack either or both of asparaginyl-tRNA or glutaminyl-tRNA synthetases. The reaction takes place in the presence of glutamine and ATP through an activated phospho-Asp-tRNA(Asn) or phospho-Glu-tRNA(Gln). The sequence is that of Aspartyl/glutamyl-tRNA(Asn/Gln) amidotransferase subunit B from Ruegeria sp. (strain TM1040) (Silicibacter sp.).